Reading from the N-terminus, the 256-residue chain is DNA repair protein RecO (256 aa).

It belongs to the RecO family.

Involved in DNA repair and RecF pathway recombination. This is DNA repair protein RecO from Nocardia farcinica (strain IFM 10152).